Consider the following 145-residue polypeptide: Peptidyl-lysine N-acetyltransferase YjaB (145 aa).

Positions 3-144 (INIRRSRHEE…KPYPLLNLIY (142 aa)) constitute an N-acetyltransferase domain.

This sequence belongs to the acetyltransferase family.

It carries out the reaction L-lysyl-[protein] + acetyl-CoA = N(6)-acetyl-L-lysyl-[protein] + CoA + H(+). Functionally, N-epsilon-lysine acetyltransferase that catalyzes acetylation of a large number of proteins. In Salmonella typhimurium (strain LT2 / SGSC1412 / ATCC 700720), this protein is Peptidyl-lysine N-acetyltransferase YjaB (yjaB).